A 126-amino-acid chain; its full sequence is Protein ApaG (126 aa).

Residues 2–126 (SALDDSIRVE…FRLALPGLLH (125 aa)) form the ApaG domain.

This Shewanella sp. (strain MR-4) protein is Protein ApaG.